Reading from the N-terminus, the 656-residue chain is Protein arginine N-methyltransferase 7 (656 aa).

2 consecutive SAM-dependent MTase PRMT-type domains span residues 12–338 (EREW…FSIW) and 343–656 (GKDS…QSGN).

It belongs to the class I-like SAM-binding methyltransferase superfamily. Protein arginine N-methyltransferase family. PRMT7 subfamily.

Arginine methyltransferase that can both catalyze the formation of omega-N monomethylarginine (MMA) and symmetrical dimethylarginine (sDMA). The chain is Protein arginine N-methyltransferase 7 (prmt-7) from Caenorhabditis briggsae.